The sequence spans 409 residues: Histidine--tRNA ligase (409 aa).

It belongs to the class-II aminoacyl-tRNA synthetase family.

It localises to the cytoplasm. It carries out the reaction tRNA(His) + L-histidine + ATP = L-histidyl-tRNA(His) + AMP + diphosphate + H(+). The chain is Histidine--tRNA ligase from Methanosphaerula palustris (strain ATCC BAA-1556 / DSM 19958 / E1-9c).